A 453-amino-acid polypeptide reads, in one-letter code: Ankyrin repeat and SOCS box protein 16 (453 aa).

ANK repeat units follow at residues 56 to 85, 110 to 139, 142 to 171, 175 to 204, 209 to 238, 242 to 279, and 283 to 312; these read CRDPAVHNALFSGDLQQLQILFQDEDAANM, KQTAPLTIAVARGYTDCARHLILQGAELDA, GGRAALHEACAQAHPDCVRLLLTFGAKANV, EGMTPLHLCTSPESLQCAKLLLEAGASVNV, SEVTPLHVAAARGLEQHVALYLQNGADVAL, QGETALNAACAGAEGPGSSRQHEAAARQLLEAGADPQA, and KRHTPLHNACANGCGGLAELLLRHGASPGV. One can recognise an SOCS box domain in the interval 397-453; the sequence is FYSSALSMENQPRQLQHLARLAVRAQLGSHCRQAAAQLPLPPLLRDYLLLGVEGRIQ.

Belongs to the ankyrin SOCS box (ASB) family.

Its pathway is protein modification; protein ubiquitination. Its function is as follows. May be a substrate-recognition component of a SCF-like ECS (Elongin-Cullin-SOCS-box protein) E3 ubiquitin-protein ligase complex which mediates the ubiquitination and subsequent proteasomal degradation of target proteins. The protein is Ankyrin repeat and SOCS box protein 16 (Asb16) of Mus musculus (Mouse).